A 483-amino-acid polypeptide reads, in one-letter code: Bifunctional pantoate ligase/cytidylate kinase (483 aa).

Positions methionine 1–alanine 246 are pantoate--beta-alanine ligase. Residue methionine 4 to histidine 11 participates in ATP binding. Histidine 11 (proton donor) is an active-site residue. A (R)-pantoate-binding site is contributed by glutamine 34. A beta-alanine-binding site is contributed by glutamine 34. Glycine 124–aspartate 127 contacts ATP. Glutamine 130 is a binding site for (R)-pantoate. Residues valine 153 and leucine 161–arginine 164 contribute to the ATP site. Positions phenylalanine 247–arginine 483 are cytidylate kinase.

In the N-terminal section; belongs to the pantothenate synthetase family. This sequence in the C-terminal section; belongs to the cytidylate kinase family. Type 1 subfamily.

The protein resides in the cytoplasm. It catalyses the reaction (R)-pantoate + beta-alanine + ATP = (R)-pantothenate + AMP + diphosphate + H(+). The catalysed reaction is CMP + ATP = CDP + ADP. The enzyme catalyses dCMP + ATP = dCDP + ADP. Its pathway is cofactor biosynthesis; (R)-pantothenate biosynthesis; (R)-pantothenate from (R)-pantoate and beta-alanine: step 1/1. In terms of biological role, catalyzes the condensation of pantoate with beta-alanine in an ATP-dependent reaction via a pantoyl-adenylate intermediate. Functionally, catalyzes the transfer of a phosphate group from ATP to either CMP or dCMP to form CDP or dCDP and ADP, respectively. The chain is Bifunctional pantoate ligase/cytidylate kinase from Synechococcus sp. (strain CC9902).